A 431-amino-acid polypeptide reads, in one-letter code: 3-phosphoshikimate 1-carboxyvinyltransferase (431 aa).

Residues Lys21, Ser22, and Arg26 each coordinate 3-phosphoshikimate. Lys21 provides a ligand contact to phosphoenolpyruvate. Phosphoenolpyruvate is bound by residues Gly94 and Arg122. 3-phosphoshikimate is bound by residues Ser167, Gln169, Asp315, and Lys342. Gln169 contacts phosphoenolpyruvate. Asp315 serves as the catalytic Proton acceptor. 2 residues coordinate phosphoenolpyruvate: Arg346 and Arg388.

It belongs to the EPSP synthase family. In terms of assembly, monomer.

Its subcellular location is the cytoplasm. It catalyses the reaction 3-phosphoshikimate + phosphoenolpyruvate = 5-O-(1-carboxyvinyl)-3-phosphoshikimate + phosphate. Its pathway is metabolic intermediate biosynthesis; chorismate biosynthesis; chorismate from D-erythrose 4-phosphate and phosphoenolpyruvate: step 6/7. Functionally, catalyzes the transfer of the enolpyruvyl moiety of phosphoenolpyruvate (PEP) to the 5-hydroxyl of shikimate-3-phosphate (S3P) to produce enolpyruvyl shikimate-3-phosphate and inorganic phosphate. This is 3-phosphoshikimate 1-carboxyvinyltransferase from Pelotomaculum thermopropionicum (strain DSM 13744 / JCM 10971 / SI).